Here is a 133-residue protein sequence, read N- to C-terminus: Probable mitochondrial pyruvate carrier 2 (133 aa).

A run of 3 helical transmembrane segments spans residues 40 to 57 (VFFWAPTIKWTLIGAGLA), 73 to 91 (ALFATGAIWTRYCLVITPI), and 100 to 116 (FFVMCTGLAQLCRIAHY).

Belongs to the mitochondrial pyruvate carrier (MPC) (TC 2.A.105) family.

Its subcellular location is the mitochondrion inner membrane. Functionally, may mediate the uptake of pyruvate into mitochondria. The polypeptide is Probable mitochondrial pyruvate carrier 2 (Caenorhabditis elegans).